The following is a 420-amino-acid chain: Tyrosine--tRNA ligase (420 aa).

Residue tyrosine 36 coordinates L-tyrosine. The 'HIGH' region signature appears at 41–50 (PTADSLHIGH). L-tyrosine contacts are provided by tyrosine 170 and glutamine 174. A 'KMSKS' region motif is present at residues 231–235 (KFGKS). Position 234 (lysine 234) interacts with ATP. In terms of domain architecture, S4 RNA-binding spans 353-420 (SNIIDVLIET…KKKYFMVNYK (68 aa)).

Belongs to the class-I aminoacyl-tRNA synthetase family. TyrS type 1 subfamily. Homodimer.

The protein resides in the cytoplasm. It carries out the reaction tRNA(Tyr) + L-tyrosine + ATP = L-tyrosyl-tRNA(Tyr) + AMP + diphosphate + H(+). Its function is as follows. Catalyzes the attachment of tyrosine to tRNA(Tyr) in a two-step reaction: tyrosine is first activated by ATP to form Tyr-AMP and then transferred to the acceptor end of tRNA(Tyr). In Staphylococcus haemolyticus (strain JCSC1435), this protein is Tyrosine--tRNA ligase.